The primary structure comprises 317 residues: Porphobilinogen deaminase (317 aa).

The residue at position 245 (cysteine 245) is an S-(dipyrrolylmethanemethyl)cysteine.

This sequence belongs to the HMBS family. In terms of assembly, monomer. Requires dipyrromethane as cofactor.

It carries out the reaction 4 porphobilinogen + H2O = hydroxymethylbilane + 4 NH4(+). The protein operates within porphyrin-containing compound metabolism; protoporphyrin-IX biosynthesis; coproporphyrinogen-III from 5-aminolevulinate: step 2/4. It participates in porphyrin-containing compound metabolism; chlorophyll biosynthesis. Tetrapolymerization of the monopyrrole PBG into the hydroxymethylbilane pre-uroporphyrinogen in several discrete steps. The chain is Porphobilinogen deaminase from Parasynechococcus marenigrum (strain WH8102).